Here is a 409-residue protein sequence, read N- to C-terminus: Arginine deiminase (409 aa).

Catalysis depends on Cys-399, which acts as the Amidino-cysteine intermediate.

It belongs to the arginine deiminase family.

Its subcellular location is the cytoplasm. The catalysed reaction is L-arginine + H2O = L-citrulline + NH4(+). It participates in amino-acid degradation; L-arginine degradation via ADI pathway; carbamoyl phosphate from L-arginine: step 1/2. The protein is Arginine deiminase of Streptococcus pneumoniae (strain P1031).